Consider the following 70-residue polypeptide: Putative venom toxin Ts29 (70 aa).

Residues 1 to 20 (MSPLFVVLLIATTTFYHSDA) form the signal peptide.

Expressed by the venom gland.

It is found in the secreted. This chain is Putative venom toxin Ts29, found in Tityus serrulatus (Brazilian scorpion).